Here is a 1250-residue protein sequence, read N- to C-terminus: Phospholipid-transporting ATPase IC (1250 aa).

Acidic residues-rich tracts occupy residues 1 to 13 (MDTDYESTYEDDS) and 24 to 40 (SDDETDDELDSPQTDEP). Residues 1–52 (MDTDYESTYEDDSQVPNDDVVPYSDDETDDELDSPQTDEPEQNRRNVQAEQS) are disordered. At 1–133 (MDTDYESTYE…VLLILQTIPQ (133 aa)) the chain is on the cytoplasmic side. A helical membrane pass occupies residues 134–154 (ISTVTWSTTLIPLLLVLGITA). Over 155–338 (IKDLVDDIAR…TKIDYLMNYM (184 aa)) the chain is Exoplasmic loop. A helical transmembrane segment spans residues 339–359 (VYTIFVLLILAAAGLAIGQTF). Topologically, residues 360-385 (WEAKLGAANVSWYLYDGNNYSPSYRG) are cytoplasmic. The chain crosses the membrane as a helical span at residues 386–406 (FLAFWGYIIVLNTMVPISLYV). The Exoplasmic loop portion of the chain corresponds to 407–956 (SVEVIRLGQS…KFLRYFFYKN (550 aa)). Asp-454 (4-aspartylphosphate intermediate) is an active-site residue. Residues Asp-454, Lys-455, Thr-456, Glu-553, Phe-594, Lys-617, Arg-650, Thr-730, Gly-731, Asp-732, Arg-865, and Lys-871 each coordinate ATP. Residue Asp-454 participates in Mg(2+) binding. Residue Thr-456 participates in Mg(2+) binding. Position 891 (Asp-891) interacts with Mg(2+). ATP is bound by residues Asn-894 and Asp-895. Asp-895 contributes to the Mg(2+) binding site. Residues 957 to 977 (FSFTLVHFWYSFFNGFSAQTV) form a helical membrane-spanning segment. The Cytoplasmic segment spans residues 978–980 (YED). A helical transmembrane segment spans residues 981-1001 (WFITLYNVLYSSLPVLLVGLL). The Exoplasmic loop portion of the chain corresponds to 1002 to 1034 (DQDVSDKLSLAFPRLYVPGQKDLLFNYKKFFLS). Residues 1035-1055 (LFHGIVTSLIIFFIPYGAFLL) traverse the membrane as a helical segment. At 1056–1069 (TMGQDGEAPSDYQS) the chain is on the cytoplasmic side. The chain crosses the membrane as a helical span at residues 1070 to 1090 (FAVTTATALVITVNFQIGLDT). Over 1091-1092 (SY) the chain is Exoplasmic loop. A helical membrane pass occupies residues 1093–1113 (WTFVNAFSIFGSIAIYFGIMF). Topologically, residues 1114-1117 (DLHS) are cytoplasmic. A helical transmembrane segment spans residues 1118-1138 (AGIHVLFPSMFIFTGAAPNAL). Residues 1139-1140 (RQ) lie on the Exoplasmic loop side of the membrane. The helical transmembrane segment at 1141–1161 (PYLWLTIILTVAFCLLPIVAL) threads the bilayer. Topologically, residues 1162–1250 (RFLAKTIWPS…AQITHFTPQT (89 aa)) are cytoplasmic.

It belongs to the cation transport ATPase (P-type) (TC 3.A.3) family. Type IV subfamily. Component of a P4-ATPase flippase complex which consists of a catalytic alpha subunit and an accessory beta subunit. The flippase ATP8B1:TMEM30A complex can form an intermediate phosphoenzyme in vitro. Also interacts with beta subunit TMEM30B. Mg(2+) serves as cofactor.

The protein localises to the cell membrane. It localises to the apical cell membrane. Its subcellular location is the cell projection. It is found in the stereocilium. The protein resides in the endoplasmic reticulum. The protein localises to the golgi apparatus. It catalyses the reaction ATP + H2O + phospholipidSide 1 = ADP + phosphate + phospholipidSide 2.. It carries out the reaction a 1,2-diacyl-sn-glycero-3-phospho-L-serine(out) + ATP + H2O = a 1,2-diacyl-sn-glycero-3-phospho-L-serine(in) + ADP + phosphate + H(+). Its function is as follows. Catalytic component of a P4-ATPase flippase complex which catalyzes the hydrolysis of ATP coupled to the transport of aminophospholipids from the outer to the inner leaflet of various membranes and ensures the maintenance of asymmetric distribution of phospholipids. Phospholipid translocation also seems to be implicated in vesicle formation and in uptake of lipid signaling molecules. May also participate in the establishment of the canalicular membrane integrity by ensuring asymmetric distribution of phospholipids in the canicular membrane. This chain is Phospholipid-transporting ATPase IC (atp8b1), found in Xenopus tropicalis (Western clawed frog).